The primary structure comprises 1328 residues: Protein turtle homolog B (1328 aa).

An N-terminal signal peptide occupies residues 1–17 (MIWYVATLIASVISTRG). The Extracellular portion of the chain corresponds to 18–722 (LVAQGAHGLR…DLTDDGLARP (705 aa)). 5 consecutive Ig-like domains span residues 30–115 (PEFV…ECKV), 139–226 (PTFT…LLVQ), 228–320 (PPFI…AYLT), 324–415 (PARV…ARLV), and 420–504 (PYFT…THLT). Intrachain disulfides connect Cys45/Cys113 and Cys161/Cys208. N-linked (GlcNAc...) asparagine glycans are attached at residues Asn241 and Asn258. Intrachain disulfides connect Cys250-Cys303, Cys346-Cys397, and Cys442-Cys488. 2 Fibronectin type-III domains span residues 512–604 (APGS…TLAF) and 614–708 (LVTP…STDI). Residue Asn624 is glycosylated (N-linked (GlcNAc...) asparagine). Residues 723-743 (VLAGIVATICFLAAAILFSTL) form a helical membrane-spanning segment. Residues 744–1328 (AACFVNKQRK…EPPTTLPTSG (585 aa)) are Cytoplasmic-facing. 3 disordered regions span residues 758 to 817 (RKKD…EKEL), 914 to 1040 (PMSS…PEPW), and 1106 to 1328 (KSPG…PTSG). Ser775, Ser783, and Ser794 each carry phosphoserine. The segment covering 990-1001 (SPLSSVMSSPPL) has biased composition (low complexity). Polar residues-rich tracts occupy residues 1018–1033 (ENAS…TPTG), 1129–1141 (LVSQ…TSQG), and 1199–1214 (SRLS…SRTG). The residue at position 1136 (Arg1136) is an Omega-N-methylarginine. Phosphoserine occurs at positions 1207 and 1215. The segment covering 1246–1273 (SFSRKSTPSSTGSPSQSSRSGSPSYRPT) has biased composition (low complexity). 2 stretches are compositionally biased toward pro residues: residues 1284–1295 (PSPPPGPAPPAP) and 1318–1328 (PEPPTTLPTSG).

Belongs to the immunoglobulin superfamily. Turtle family. Found in a complex with MAGI2 and NLGN2, where it interacts with MAGI2 (via PDZ 5 and PDZ 6 domains). In terms of processing, N-glycosylated and sialylated. Not significantly O-glycosylated. As to expression, detected in brain.

The protein resides in the cell membrane. Its subcellular location is the postsynaptic cell membrane. The protein localises to the postsynaptic density. Functionally, transmembrane protein which is abundantly expressed in interneurons, where it may regulate inhibitory synapse development. May mediate homophilic cell adhesion. This is Protein turtle homolog B from Mus musculus (Mouse).